The following is a 266-amino-acid chain: 5'-nucleotidase SurE (266 aa).

The a divalent metal cation site is built by Asp10, Asp11, Ser41, and Asn97.

The protein belongs to the SurE nucleotidase family. It depends on a divalent metal cation as a cofactor.

Its subcellular location is the cytoplasm. It catalyses the reaction a ribonucleoside 5'-phosphate + H2O = a ribonucleoside + phosphate. Its function is as follows. Nucleotidase that shows phosphatase activity on nucleoside 5'-monophosphates. The sequence is that of 5'-nucleotidase SurE from Methanocella arvoryzae (strain DSM 22066 / NBRC 105507 / MRE50).